Here is a 475-residue protein sequence, read N- to C-terminus: Aspartate ammonia-lyase (475 aa).

6 residues coordinate L-aspartate: threonine 104, serine 143, threonine 144, asparagine 145, threonine 190, and histidine 191. Residues 320–329 (GSSIMPGKVN) form an SS loop region. Serine 321 acts as the Proton acceptor in catalysis. Residues serine 322 and lysine 327 each contribute to the L-aspartate site.

Belongs to the class-II fumarase/aspartase family. Aspartase subfamily. Homotetramer.

It catalyses the reaction L-aspartate = fumarate + NH4(+). Functionally, catalyzes the reversible conversion of L-aspartate to fumarate and ammonia. The protein is Aspartate ammonia-lyase of Bacillus subtilis (strain 168).